The sequence spans 226 residues: Reticulon-like protein B16 (226 aa).

Residues 41–224 (AADLLLWRRR…RLSWSLSKDK (184 aa)) form the Reticulon domain. Transmembrane regions (helical) follow at residues 54–74 (LGVIIISTVAWLIFEFSGLPF), 75–95 (LSVSSDVLLIVIMISFVHARV), and 149–169 (VVICLWLLSAIGSYISLCTLL).

It is found in the endoplasmic reticulum membrane. The polypeptide is Reticulon-like protein B16 (RTNLB16) (Arabidopsis thaliana (Mouse-ear cress)).